Here is a 1020-residue protein sequence, read N- to C-terminus: MFRRSKNNSYDTSQTKQRFSIKKFKFGAASVLIGLSFLGGVTQGNLNIFEESIVAASTIPGSAATLNTSITKNIQNGNAYIDLYDVKLGKIDPLQLIVLEQGFTAKYVFRQGTKYYGDVSQLQSTGRASLTYNIFGEDGLPHVKTDGQIDIVSVALTIYDSTTLRDKIEEVRTNANDPKWTEESRTEVLTGLDTIKTDIDNNPKTQTDIDSKIVEVNELEKLLVLSVPDKDKYDPTGGETTVPQGTPVSDKEITDLVKIPDGSKGVPTVVGDRPDTNVPGDHKVTVEVTYPDGTKDTVEVTVHVTPKPVPDKDKYDPTGGETTVPQGTPVSDKEITDLVKIPDGSKGVPTVVGDRPDTNVPGDHKVTVEVTYPDGTKDTVEVTVHVTPKPVPDKDKYDPTGGETTVPQGTPVSDKEITDLVKIPDGSKGVPTVVGDRPDTNVPGDHKVTVEVTYPDGTKDTVEVTVHVTPKPVPDKDKYDPTGGETTVPQGTPVSDKEITDLVKIPDGSKGVPTVVGDRPDTNVPGDHKVTVEVTYPDGTKDTVEVTVHVTPKPVPDKDKYDPTGGETTVPQGTPVSDKEITDLVKIPDGSKGVPTVVGDRPDTNVPGDHKVTVEVTYPDGTKDTVEVTVHVTPKPVPDKDKYDPTGGETTVPQGTPVSDKEITDLVKIPDGSKGVPTVVGDRPDTNVPGDHKVTVEVTYPDGTKDTVEVTVHVTPKPVPDKDKYDPTGGETTVPQGTPVSDKEITDLVKIPDGSKGVPTVVGDRPDTNVPGDHKVTVEVTYPDGTKDTVEVTVHVTPKPVPDKDKYDPTGGETTVPQGTPVSDKEITDLVKIPDGSKGVPTVVGDRPDTNVPGDHKVTVEVTYPDGTKDTVEVTVHVTPKPVPDKDKYDPTGGETTVPQGTPVSDKEITDLVKIPDGSKGVPTVVGDRPDTNVPGDHKVTVEVTYPDGTKDTVEVTVHVTPKPVPDKDKYDPTGKAQQVNGKGNKLPATGENATPFFNVAALTIISSVGLLSVSKKKED.

Residues 1-41 (MFRRSKNNSYDTSQTKQRFSIKKFKFGAASVLIGLSFLGGV) form the signal peptide. Residues 227–964 (VPDKDKYDPT…EVTVHVTPKP (738 aa)) form a 9 X 82 AA tandem repeats region. Disordered regions lie at residues 261 to 281 (DGSKGVPTVVGDRPDTNVPGD), 306 to 330 (PKPVPDKDKYDPTGGETTVPQGTPV), 342 to 363 (PDGSKGVPTVVGDRPDTNVPGD), 388 to 445 (PKPV…VPGD), 470 to 494 (PKPVPDKDKYDPTGGETTVPQGTPV), 506 to 527 (PDGSKGVPTVVGDRPDTNVPGD), 552 to 576 (PKPVPDKDKYDPTGGETTVPQGTPV), 588 to 610 (PDGSKGVPTVVGDRPDTNVPGDH), 634 to 658 (PKPVPDKDKYDPTGGETTVPQGTPV), 670 to 692 (PDGSKGVPTVVGDRPDTNVPGDH), 716 to 740 (PKPVPDKDKYDPTGGETTVPQGTPV), 752 to 774 (PDGSKGVPTVVGDRPDTNVPGDH), 798 to 822 (PKPVPDKDKYDPTGGETTVPQGTPV), 834 to 856 (PDGSKGVPTVVGDRPDTNVPGDH), 880 to 904 (PKPVPDKDKYDPTGGETTVPQGTPV), and 962 to 989 (PKPVPDKDKYDPTGKAQQVNGKGNKLPA). A compositionally biased stretch (basic and acidic residues) spans 272–281 (DRPDTNVPGD). Positions 320–329 (GETTVPQGTP) are enriched in polar residues. Positions 354-363 (DRPDTNVPGD) are enriched in basic and acidic residues. Over residues 402 to 411 (GETTVPQGTP) the composition is skewed to polar residues. Residues 436–445 (DRPDTNVPGD) show a composition bias toward basic and acidic residues. Positions 484-493 (GETTVPQGTP) are enriched in polar residues. A compositionally biased stretch (basic and acidic residues) spans 518 to 527 (DRPDTNVPGD). Residues 566-575 (GETTVPQGTP) are compositionally biased toward polar residues. Residues 600-610 (DRPDTNVPGDH) show a composition bias toward basic and acidic residues. A compositionally biased stretch (polar residues) spans 648–657 (GETTVPQGTP). Basic and acidic residues predominate over residues 682–692 (DRPDTNVPGDH). Residues 730 to 739 (GETTVPQGTP) show a composition bias toward polar residues. Over residues 764–774 (DRPDTNVPGDH) the composition is skewed to basic and acidic residues. Over residues 812 to 821 (GETTVPQGTP) the composition is skewed to polar residues. The span at 846-856 (DRPDTNVPGDH) shows a compositional bias: basic and acidic residues. The span at 894–903 (GETTVPQGTP) shows a compositional bias: polar residues. The LPXTG sorting signal motif lies at 987-991 (LPATG). Threonine 990 is subject to Pentaglycyl murein peptidoglycan amidated threonine. Positions 991–1020 (GENATPFFNVAALTIISSVGLLSVSKKKED) are cleaved as a propeptide — removed by sortase.

Its subcellular location is the secreted. The protein resides in the cell wall. Functionally, may play a role in both virulence and immunity. This is C protein alpha-antigen (bca) from Streptococcus agalactiae serotype Ia (strain ATCC 27591 / A909 / CDC SS700).